We begin with the raw amino-acid sequence, 293 residues long: Homoserine O-acetyltransferase (293 aa).

Cys-141 serves as the catalytic Acyl-thioester intermediate. Substrate contacts are provided by Lys-162 and Ser-190. The active-site Proton acceptor is the His-234. Glu-236 is an active-site residue. Arg-248 serves as a coordination point for substrate.

The protein belongs to the MetA family.

It localises to the cytoplasm. It catalyses the reaction L-homoserine + acetyl-CoA = O-acetyl-L-homoserine + CoA. The protein operates within amino-acid biosynthesis; L-methionine biosynthesis via de novo pathway; O-acetyl-L-homoserine from L-homoserine: step 1/1. Functionally, transfers an acetyl group from acetyl-CoA to L-homoserine, forming acetyl-L-homoserine. This Campylobacter jejuni subsp. jejuni serotype O:2 (strain ATCC 700819 / NCTC 11168) protein is Homoserine O-acetyltransferase.